The sequence spans 286 residues: Beta-lactamase TEM (286 aa).

The N-terminal stretch at 1 to 23 (MSIQHFRVALIPFFAAFCLPVFA) is a signal peptide. The Acyl-ester intermediate role is filled by Ser68. Cys75 and Cys121 are disulfide-bonded. The Proton acceptor role is filled by Glu166. A substrate-binding site is contributed by 232–234 (KSG).

The protein belongs to the class-A beta-lactamase family.

The catalysed reaction is a beta-lactam + H2O = a substituted beta-amino acid. In terms of biological role, TEM-type are the most prevalent beta-lactamases in enterobacteria; they hydrolyze the beta-lactam bond in susceptible beta-lactam antibiotics, thus conferring resistance to penicillins and cephalosporins. TEM-3 and TEM-4 are capable of hydrolyzing cefotaxime and ceftazidime. TEM-5 is capable of hydrolyzing ceftazidime. TEM-6 is capable of hydrolyzing ceftazidime and aztreonam. TEM-8/CAZ-2, TEM-16/CAZ-7 and TEM-24/CAZ-6 are markedly active against ceftazidime. IRT-4 shows resistance to beta-lactamase inhibitors. This Escherichia coli protein is Beta-lactamase TEM (bla).